Consider the following 285-residue polypeptide: MVNLREIKGRINSTKSTKQITKAMQMVSSSKLRRAEQNAKAYVPYMEKIQDVVGAIASGTKDSGHPMLTARPVKKTAYLVIGSDRGLAGAYNSSILRQVQRTIDERHKSKDEYVILAIGRVVRDYFVKRDHNVISDVVGLPDQPTFADIKEIARNAVGMFIDGTYDQLYMYYNHFVSAIANEVTEKKLLPLTDLAPPSSNASYEFEPSGEAILEVLLPQYAESLVYGALLDGKASEHASRMTAMKNATDNASDLISDLSLQYNRARQAAITQEITEIVGGAAALE.

It belongs to the ATPase gamma chain family. F-type ATPases have 2 components, CF(1) - the catalytic core - and CF(0) - the membrane proton channel. CF(1) has five subunits: alpha(3), beta(3), gamma(1), delta(1), epsilon(1). CF(0) has three main subunits: a, b and c.

The protein resides in the cell membrane. Its function is as follows. Produces ATP from ADP in the presence of a proton gradient across the membrane. The gamma chain is believed to be important in regulating ATPase activity and the flow of protons through the CF(0) complex. This is ATP synthase gamma chain from Lysinibacillus sphaericus (strain C3-41).